Reading from the N-terminus, the 832-residue chain is Cadherin-like protein 26 (832 aa).

Positions Met1–Ile27 are cleaved as a signal peptide. The Extracellular portion of the chain corresponds to Asp28–His614. Cadherin domains are found at residues Asp35–Phe165, Pro166–Phe275, Thr276–Phe396, and His397–Leu500. N-linked (GlcNAc...) asparagine glycosylation is found at Asn81, Asn85, Asn171, and Asn177. Residue Asn462 is glycosylated (N-linked (GlcNAc...) asparagine). Residues Val615 to Leu635 traverse the membrane as a helical segment. The Cytoplasmic segment spans residues Leu636–Ser832. Residues Ser813–Ser832 are disordered.

In terms of assembly, homodimer. Component of a cadherin:catenin adhesion complex composed of at least of CDH26, beta-catenin/CTNNB1, alpha-catenin/CTNNA1 and p120 catenin/CTNND1. N-glycosylated. In terms of tissue distribution, expressed by epithelial cells of gastrointestinal tissue.

The protein resides in the cell membrane. Cadherins are calcium-dependent cell adhesion proteins. They preferentially interact with themselves in a homophilic manner in connecting cells; cadherins may thus contribute to the sorting of heterogeneous cell types. Ligand for integrins alpha-E/beta-7, ITGAE:ITGAB7, alpha-4/beta-7, ITGA4:ITGAB7 and alpha-4/beta-1, ITGA4:ITGAB1 through which modulates CD4(+) T cells activation. This is Cadherin-like protein 26 (CDH26) from Homo sapiens (Human).